A 313-amino-acid chain; its full sequence is Ribosomal RNA small subunit methyltransferase H (313 aa).

Residues 35-37 (GGH), aspartate 55, phenylalanine 80, aspartate 102, and glutamine 109 each bind S-adenosyl-L-methionine.

This sequence belongs to the methyltransferase superfamily. RsmH family.

It is found in the cytoplasm. It carries out the reaction cytidine(1402) in 16S rRNA + S-adenosyl-L-methionine = N(4)-methylcytidine(1402) in 16S rRNA + S-adenosyl-L-homocysteine + H(+). Specifically methylates the N4 position of cytidine in position 1402 (C1402) of 16S rRNA. This is Ribosomal RNA small subunit methyltransferase H from Shewanella sp. (strain MR-7).